Here is a 200-residue protein sequence, read N- to C-terminus: Large ribosomal subunit protein uL4 (200 aa).

The tract at residues 42 to 69 (SKAQKNRSDVSGGGRKPWRQKGTGRARA) is disordered.

It belongs to the universal ribosomal protein uL4 family. Part of the 50S ribosomal subunit.

Functionally, one of the primary rRNA binding proteins, this protein initially binds near the 5'-end of the 23S rRNA. It is important during the early stages of 50S assembly. It makes multiple contacts with different domains of the 23S rRNA in the assembled 50S subunit and ribosome. Its function is as follows. Forms part of the polypeptide exit tunnel. In Alcanivorax borkumensis (strain ATCC 700651 / DSM 11573 / NCIMB 13689 / SK2), this protein is Large ribosomal subunit protein uL4.